The following is a 171-amino-acid chain: tRNA-splicing endonuclease (171 aa).

Catalysis depends on residues Tyr110, His117, and Lys148.

Belongs to the tRNA-intron endonuclease family. Archaeal short subfamily. As to quaternary structure, homotetramer; although the tetramer contains four active sites, only two participate in the cleavage. Therefore, it should be considered as a dimer of dimers.

The catalysed reaction is pretRNA = a 3'-half-tRNA molecule with a 5'-OH end + a 5'-half-tRNA molecule with a 2',3'-cyclic phosphate end + an intron with a 2',3'-cyclic phosphate and a 5'-hydroxyl terminus.. Endonuclease that removes tRNA introns. Cleaves pre-tRNA at the 5'- and 3'-splice sites to release the intron. The products are an intron and two tRNA half-molecules bearing 2',3' cyclic phosphate and 5'-OH termini. Recognizes a pseudosymmetric substrate in which 2 bulged loops of 3 bases are separated by a stem of 4 bp. In Thermococcus onnurineus (strain NA1), this protein is tRNA-splicing endonuclease.